We begin with the raw amino-acid sequence, 406 residues long: Cyclin-dependent kinase 4 homolog (406 aa).

The Protein kinase domain occupies 102 to 388; that stretch reads TFLFQALGKG…ARGALSHPFL (287 aa). Residues 108 to 116 and K131 contribute to the ATP site; that span reads LGKGAYGNV. D233 (proton acceptor) is an active-site residue. N238 and D251 together coordinate Mg(2+).

Belongs to the protein kinase superfamily. CMGC Ser/Thr protein kinase family. CDC2/CDKX subfamily. In terms of assembly, interacts with cyd-1; the interaction is likely involved in regulating cdk-4 activity. Mg(2+) is required as a cofactor.

It catalyses the reaction L-seryl-[protein] + ATP = O-phospho-L-seryl-[protein] + ADP + H(+). It carries out the reaction L-threonyl-[protein] + ATP = O-phospho-L-threonyl-[protein] + ADP + H(+). Functionally, serine/threonine-protein kinase which, in association with cyclin D-like protein cyd-1, is required for the progression through the G1 phase of the cell cycle during postembryonic development by phosphorylating and inhibiting lin-35 and fzr-1. In complex with cyd-1, involved in sex determination during gonadogenesis by regulating the asymmetric division of the somatic gonadal precursor cell (SGP). The polypeptide is Cyclin-dependent kinase 4 homolog (Caenorhabditis elegans).